We begin with the raw amino-acid sequence, 60 residues long: Cytotoxin sagitoxin (60 aa).

4 cysteine pairs are disulfide-bonded: Cys-3–Cys-21, Cys-14–Cys-38, Cys-42–Cys-53, and Cys-54–Cys-59.

It belongs to the three-finger toxin family. Short-chain subfamily. Type IA cytotoxin sub-subfamily. Monomer in solution; Homodimer and oligomer (homohexamer) in the presence of negatively charged lipids forming a pore with a size ranging between 20 and 30 Angstroms. As to expression, expressed by the venom gland.

The protein resides in the secreted. The protein localises to the target cell membrane. Functionally, shows cytolytic activity on many different cells by forming pore in lipid membranes. In vivo, increases heart rate or kill the animal by cardiac arrest. In addition, it binds to heparin with high affinity, interacts with Kv channel-interacting protein 1 (KCNIP1) in a calcium-independent manner, and binds to integrin alpha-V/beta-3 (ITGAV/ITGB3) with moderate affinity. The polypeptide is Cytotoxin sagitoxin (Naja sagittifera (Andaman cobra)).